The primary structure comprises 542 residues: Chaperonin GroEL (542 aa).

ATP-binding positions include 29-32 (TMGP), lysine 50, 86-90 (DGTTT), glycine 414, 477-479 (NAA), and aspartate 493.

Belongs to the chaperonin (HSP60) family. In terms of assembly, forms a cylinder of 14 subunits composed of two heptameric rings stacked back-to-back. Interacts with the co-chaperonin GroES.

The protein localises to the cytoplasm. The catalysed reaction is ATP + H2O + a folded polypeptide = ADP + phosphate + an unfolded polypeptide.. Its function is as follows. Together with its co-chaperonin GroES, plays an essential role in assisting protein folding. The GroEL-GroES system forms a nano-cage that allows encapsulation of the non-native substrate proteins and provides a physical environment optimized to promote and accelerate protein folding. This chain is Chaperonin GroEL, found in Sulfurovum sp. (strain NBC37-1).